We begin with the raw amino-acid sequence, 233 residues long: Large ribosomal subunit protein uL1 (233 aa).

Belongs to the universal ribosomal protein uL1 family. As to quaternary structure, part of the 50S ribosomal subunit.

In terms of biological role, binds directly to 23S rRNA. The L1 stalk is quite mobile in the ribosome, and is involved in E site tRNA release. Functionally, protein L1 is also a translational repressor protein, it controls the translation of the L11 operon by binding to its mRNA. This is Large ribosomal subunit protein uL1 from Campylobacter jejuni subsp. doylei (strain ATCC BAA-1458 / RM4099 / 269.97).